The sequence spans 117 residues: NADH-ubiquinone oxidoreductase chain 3 (117 aa).

3 helical membrane passes run 1 to 21, 56 to 76, and 86 to 106; these read MLSLTYIVGIASALVIILLLV, FFLVAILFLLFDLEIALILPY, and TFYNYWLVMLLVVVLTFGLMY.

Belongs to the complex I subunit 3 family.

The protein localises to the mitochondrion membrane. The enzyme catalyses a ubiquinone + NADH + 5 H(+)(in) = a ubiquinol + NAD(+) + 4 H(+)(out). Functionally, core subunit of the mitochondrial membrane respiratory chain NADH dehydrogenase (Complex I) that is believed to belong to the minimal assembly required for catalysis. Complex I functions in the transfer of electrons from NADH to the respiratory chain. The immediate electron acceptor for the enzyme is believed to be ubiquinone. The sequence is that of NADH-ubiquinone oxidoreductase chain 3 (ND3) from Branchiostoma lanceolatum (Common lancelet).